Here is a 229-residue protein sequence, read N- to C-terminus: MKLSADLKAFEGRIGHQFREPERLLRAVTHSSLSSVTRSDNQRLEFLGDRVLGLVMAEALLAADRAASEGQLAPRFNALVRKETCAAVAREVALGDVLKLGRSEMMSGGRRKEALLGDALEAVIAAVYLDAGFEAARQLVLRLWGARIAQVERDARDAKTALQEWAQARGLPPPTYEAVDRSGPDHAPIFTVEVRLGNGETDRAAAGTKRVAEQAAARALLARMEARHD.

Residues 7-132 (LKAFEGRIGH…VIAAVYLDAG (126 aa)) enclose the RNase III domain. E45 serves as a coordination point for Mg(2+). Residue D49 is part of the active site. D118 and E121 together coordinate Mg(2+). Residue E121 is part of the active site. The region spanning 157–226 (DAKTALQEWA…ARALLARMEA (70 aa)) is the DRBM domain.

Belongs to the ribonuclease III family. As to quaternary structure, homodimer. It depends on Mg(2+) as a cofactor.

It is found in the cytoplasm. The enzyme catalyses Endonucleolytic cleavage to 5'-phosphomonoester.. Digests double-stranded RNA. Involved in the processing of primary rRNA transcript to yield the immediate precursors to the large and small rRNAs (23S and 16S). Processes some mRNAs, and tRNAs when they are encoded in the rRNA operon. Processes pre-crRNA and tracrRNA of type II CRISPR loci if present in the organism. This Cereibacter sphaeroides (strain ATCC 17029 / ATH 2.4.9) (Rhodobacter sphaeroides) protein is Ribonuclease 3.